The primary structure comprises 149 residues: 3-dehydroquinate dehydratase (149 aa).

Tyr22 (proton acceptor) is an active-site residue. Positions 73, 79, and 86 each coordinate substrate. The Proton donor role is filled by His99. Substrate is bound by residues 100–101 and Arg110; that span reads LS.

This sequence belongs to the type-II 3-dehydroquinase family. Homododecamer.

The enzyme catalyses 3-dehydroquinate = 3-dehydroshikimate + H2O. The protein operates within metabolic intermediate biosynthesis; chorismate biosynthesis; chorismate from D-erythrose 4-phosphate and phosphoenolpyruvate: step 3/7. Its function is as follows. Catalyzes a trans-dehydration via an enolate intermediate. The chain is 3-dehydroquinate dehydratase from Prochlorococcus marinus (strain SARG / CCMP1375 / SS120).